The sequence spans 921 residues: MMKWFAKLILSLSLAVVMAASSAAISFGASNSSLDTHASLVTQLDSAASEAAEGKSAMINESAINSNVTGWKLHGKGRMEVTGEGLRLTSDPQENVMAISETVADDFIYEADVMVTDPQADATLLFRSGEDGWSSYMLQLALGAGVIRLKDASGGEGVLNVERKVEAKPGDIYHLRVKAEGTRLQVYWGQQYEPVIDTEAAAHRTGRLGLHVWNGSALFQNIRVSDMSGNTLEPISSQGLWQPDLKGLKGTGEDGLEAKKVFRNHEADVVLEGDLILNGQGSAGLLFRSNAQGTEGYAAVLQGEGERVRVYLKKADGTILHESRVTYPSQRESRHHLEVKAIGERIQIFVDGYEPAAIDMVDTAFPSGYHGVMASSGIAYFQDVYITPYASYYTEKYRPQYHYSPIRGSASDPNGLVYFEGEYHLFHQDGGQWAHAVSRDLIHWKRLPIALPWNDLGHVWSGSAVADTTNASGLFGSSGGKGLIAYYTSYNPDRHNGNQKIGLAYSTDRGRTWKYSEEHPVVIENPGKTGEDPGGWDFRDPKVVRDEANNRWVMVVSGGDHIRLFTSTNLLNWTLTDQFGYGAYIRGGVWECPDLFQLPVEGSKKRKWVLMISTGANPNTQGSDAEYFIGDLTPEGKFINDNPAGTVLKTDWGKEYYASMSFSDMPDGRRIMLAWMTNWDYPFSFPTTGWKGQLSIPRQVSLKETEEGIRMHQTPIEELAQLRSPVLTSPTARWGTSGENLLKGITSGAYEIEAELELPPTGAASEFGFRLREGDGQRTLVGYRAAGSKMFVDRSASGMTDFSDLFSTLHEAPLKPEGNRIKLRILVDESSVEVFGNDGRVVFSDVIFPDPASRGMSFYSEGGKVKVVSLQVHALQHIWREDEAKEPRVVMDTETLELSLGQTKPLFASIDNGQGKGADGI.

The first 23 residues, 1 to 23 (MMKWFAKLILSLSLAVVMAASSA), serve as a signal peptide directing secretion. Substrate is bound by residues 409-412 (SASD), Q428, 460-461 (WS), 539-540 (RD), E591, and W679. Residue D412 is part of the active site.

This sequence belongs to the glycosyl hydrolase 32 family.

The protein localises to the secreted. The enzyme catalyses Random hydrolysis of (2-&gt;6)-beta-D-fructofuranosidic linkages in (2-&gt;6)-beta-D-fructans (levans) containing more than 3 fructose units.. Is completely inhibited by low concentrations of heavy metal ions, while Ca(2+) and Mg(2+) or chelating agents such as EDTA neither inhibit nor activate the enzyme to any significant extent. Its function is as follows. Catalyzes the hydrolysis of levan with endo-type specificity. The products of levan hydrolysis are a mixture of fructose and a series of fructooligosaccharides up to 12-mer, with levantriose being the major oligosaccharide obtained. Is not active towards sucrose. This chain is Levanase, found in Bacillus sp. (strain L7).